The following is a 148-amino-acid chain: Oleosin 1 (148 aa).

A2 carries the N-acetylalanine modification. Residues 2–28 (ADQHFQQPLHFQGSYGQQQPRSYQVAK) are polar. The segment at 29-148 (AATAVTAGGS…HVPSGQQQSS (120 aa)) is hydrophobic. 2 helical membrane-spanning segments follow: residues 37–57 (GSLL…LTIA) and 81–101 (GFLT…WIYK).

This sequence belongs to the oleosin family.

It localises to the lipid droplet. It is found in the membrane. In terms of biological role, may have a structural role to stabilize the lipid body during desiccation of the seed by preventing coalescence of the oil. Probably interacts with both lipid and phospholipid moieties of lipid bodies. May also provide recognition signals for specific lipase anchorage in lipolysis during seedling growth. The chain is Oleosin 1 (OLE1) from Prunus dulcis (Almond).